The sequence spans 344 residues: Phenylalanine--tRNA ligase alpha subunit (344 aa).

Mg(2+) is bound at residue E256.

Belongs to the class-II aminoacyl-tRNA synthetase family. Phe-tRNA synthetase alpha subunit type 1 subfamily. In terms of assembly, tetramer of two alpha and two beta subunits. Mg(2+) is required as a cofactor.

Its subcellular location is the cytoplasm. The enzyme catalyses tRNA(Phe) + L-phenylalanine + ATP = L-phenylalanyl-tRNA(Phe) + AMP + diphosphate + H(+). The chain is Phenylalanine--tRNA ligase alpha subunit (pheS) from Halalkalibacterium halodurans (strain ATCC BAA-125 / DSM 18197 / FERM 7344 / JCM 9153 / C-125) (Bacillus halodurans).